Here is a 352-residue protein sequence, read N- to C-terminus: S-adenosylmethionine:tRNA ribosyltransferase-isomerase (352 aa).

The protein belongs to the QueA family. Monomer.

Its subcellular location is the cytoplasm. The enzyme catalyses 7-aminomethyl-7-carbaguanosine(34) in tRNA + S-adenosyl-L-methionine = epoxyqueuosine(34) in tRNA + adenine + L-methionine + 2 H(+). Its pathway is tRNA modification; tRNA-queuosine biosynthesis. Functionally, transfers and isomerizes the ribose moiety from AdoMet to the 7-aminomethyl group of 7-deazaguanine (preQ1-tRNA) to give epoxyqueuosine (oQ-tRNA). The protein is S-adenosylmethionine:tRNA ribosyltransferase-isomerase of Paraburkholderia xenovorans (strain LB400).